The primary structure comprises 148 residues: Probable histone H2B.2 (148 aa).

The span at 1-32 (MAPKGEKKPAEKKPAEEKKSTVAEKAPAEKKP) shows a compositional bias: basic and acidic residues. The disordered stretch occupies residues 1–57 (MAPKGEKKPAEKKPAEEKKSTVAEKAPAEKKPKAGKKLPKEGGSAAGEKKKKRSKKS). An N6-acetyllysine mark is found at lysine 7, lysine 36, and lysine 37. A Glycyl lysine isopeptide (Lys-Gly) (interchain with G-Cter in ubiquitin) cross-link involves residue lysine 144.

This sequence belongs to the histone H2B family. As to quaternary structure, the nucleosome is a histone octamer containing two molecules each of H2A, H2B, H3 and H4 assembled in one H3-H4 heterotetramer and two H2A-H2B heterodimers. The octamer wraps approximately 147 bp of DNA. Post-translationally, can be acetylated to form H2BK6ac, H2BK33ac and H2BK34ac. In terms of processing, monoubiquitinated to form H2BK143ub1; may give a specific tag for epigenetic transcriptional activation.

It localises to the nucleus. Its subcellular location is the chromosome. Its function is as follows. Core component of nucleosome. Nucleosomes wrap and compact DNA into chromatin, limiting DNA accessibility to the cellular machineries which require DNA as a template. Histones thereby play a central role in transcription regulation, DNA repair, DNA replication and chromosomal stability. DNA accessibility is regulated via a complex set of post-translational modifications of histones, also called histone code, and nucleosome remodeling. The protein is Probable histone H2B.2 of Medicago truncatula (Barrel medic).